We begin with the raw amino-acid sequence, 336 residues long: Corrinoid adenosyltransferase PduO (336 aa).

The tract at residues 1-185 is pduON; the sequence is MAIYTRTGDA…IIREVSKRYL (185 aa). A pduOC region spans residues 194-336; it reads KETTPVALSF…IAAINVGTHQ (143 aa). Residue His207 coordinates heme. Mg(2+) is bound by residues Glu215 and Gln218.

The protein belongs to the Cob(I)alamin adenosyltransferase family. PduO subfamily. The C-terminal domain (PduOC) forms stable octamers and also crystallizes as an octamer. Forms a complex with PduS. Requires heme b as cofactor. Mg(2+) is required as a cofactor.

The protein localises to the bacterial microcompartment. It carries out the reaction cob(I)alamin-[corrinoid adenosyltransferase] + ATP = apo-[corrinoid adenosyltransferase] + adenosylcob(III)alamin + triphosphate. It functions in the pathway polyol metabolism; 1,2-propanediol degradation. Its pathway is cofactor biosynthesis; adenosylcobalamin biosynthesis. With respect to regulation, inhibited by ADP but not significantly by other nucleotides, inhibited by diphosphate and less well by triphosphate. In terms of biological role, converts cob(I)alamin to adenosylcobalamin (adenosylcob(III)alamin), the cofactor for propanediol dehydratase. Found in the bacterial microcompartment (BMC) dedicated to 1,2-propanediol (1,2-PD) degradation. For adenosylcobalamin synthesis dATP can replace ATP, but no other nucleotides will substitute. PduS and PduO allow regeneration of the adenosylcobalamin cofactor within the BMC. The 1,2-PD-specific bacterial microcompartment (BMC) concentrates low levels of 1,2-PD catabolic enzymes, concentrates volatile reaction intermediates thus enhancing pathway flux and keeps the level of toxic, mutagenic propionaldehyde low. The sequence is that of Corrinoid adenosyltransferase PduO from Salmonella typhimurium (strain LT2 / SGSC1412 / ATCC 700720).